The following is a 608-amino-acid chain: Probable potassium transport system protein Kup (608 aa).

The next 12 membrane-spanning stretches (helical) occupy residues 9–29 (LSGV…TSPL), 46–66 (PAAI…VVSV), 99–119 (TPVL…EVVI), 137–157 (PSLD…LFAI), 165–185 (VGKL…VLGL), 213–233 (TSFF…ALYA), 247–267 (WFVV…ALLL), 285–305 (ALLP…QAVI), 337–357 (IYIP…IMSF), 363–383 (LAAA…ILFC), 396–416 (LVAA…AANL), and 419–439 (IFSG…LMTS).

This sequence belongs to the HAK/KUP transporter (TC 2.A.72) family.

The protein localises to the cell inner membrane. It catalyses the reaction K(+)(in) + H(+)(in) = K(+)(out) + H(+)(out). Its function is as follows. Transport of potassium into the cell. Likely operates as a K(+):H(+) symporter. The protein is Probable potassium transport system protein Kup of Aeromonas salmonicida (strain A449).